We begin with the raw amino-acid sequence, 152 residues long: Putative pre-16S rRNA nuclease (152 aa).

The protein belongs to the YqgF nuclease family.

It localises to the cytoplasm. In terms of biological role, could be a nuclease involved in processing of the 5'-end of pre-16S rRNA. This chain is Putative pre-16S rRNA nuclease, found in Nitrosococcus oceani (strain ATCC 19707 / BCRC 17464 / JCM 30415 / NCIMB 11848 / C-107).